We begin with the raw amino-acid sequence, 557 residues long: Leucine-rich glioma-inactivated protein 1 (557 aa).

The first 34 residues, M1–G34, serve as a signal peptide directing secretion. The 38-residue stretch at K35–L72 folds into the LRRNT domain. LRR repeat units lie at residues S92–G113, H116–G137, and S140–G161. One can recognise an LRRCT domain in the interval N173 to I223. N192 carries N-linked (GlcNAc...) asparagine glycosylation. EAR repeat units lie at residues E225–H267, T271–G313, K317–G364, G366–K415, L419–G462, S464–A506, and K510–I552. N277 carries an N-linked (GlcNAc...) asparagine glycan. N-linked (GlcNAc...) asparagine glycosylation occurs at N422.

As to quaternary structure, oligomer. Interacts with KCNA1 within a complex containing KCNA1, KCNA4 and KCNAB1. Part of a complex containing ADAM22, DLG4/PSD95 and CACNG2 (stargazin). Can bind to ADAM11 and ADAM23. Glycosylated. Expressed in the brain (at protein level). Expressed in cerebellar cortex basket cell terminals (at protein level). Highly expressed in the dentate gyrus and CA3 field of the hippocampus.

It localises to the secreted. It is found in the synapse. Its subcellular location is the cytoplasm. The protein localises to the golgi apparatus. The protein resides in the endoplasmic reticulum. In terms of biological role, regulates voltage-gated potassium channels assembled from KCNA1, KCNA4 and KCNAB1. It slows down channel inactivation by precluding channel closure mediated by the KCNAB1 subunit. Ligand for ADAM22 that positively regulates synaptic transmission mediated by AMPA-type glutamate receptors. Plays a role in suppressing the production of MMP1/3 through the phosphatidylinositol 3-kinase/ERK pathway. This chain is Leucine-rich glioma-inactivated protein 1, found in Mus musculus (Mouse).